The sequence spans 134 residues: Nif-regulating protein A (134 aa).

A C4-type; atypical zinc finger spans residues 3–36; it reads CLECGLVYIVSGLKVPEKISVRVFVNRIEHPFTH.

Interacts with the general archaeal transcription factors TBPs.

Functionally, involved in nitrogen regulation. Enhances the transcription of the nitrogen fixation (nif) operon under nitrogen-limited conditions. Acts by binding to the nifH promoter region. This is Nif-regulating protein A from Methanosarcina mazei (strain ATCC BAA-159 / DSM 3647 / Goe1 / Go1 / JCM 11833 / OCM 88) (Methanosarcina frisia).